The primary structure comprises 150 residues: uncharacterized protein (150 aa).

This is an uncharacterized protein from Acidianus bottle-shaped virus (isolate Italy/Pozzuoli) (ABV).